Here is a 126-residue protein sequence, read N- to C-terminus: S-adenosylmethionine decarboxylase proenzyme (126 aa).

The active-site Schiff-base intermediate with substrate; via pyruvic acid is Ser-63. A Pyruvic acid (Ser); by autocatalysis modification is found at Ser-63. Catalysis depends on His-68, which acts as the Proton acceptor; for processing activity. Cys-83 serves as the catalytic Proton donor; for catalytic activity.

This sequence belongs to the prokaryotic AdoMetDC family. Type 1 subfamily. Heterotetramer of two alpha and two beta chains arranged as a dimer of alpha/beta heterodimers. The cofactor is pyruvate. Post-translationally, is synthesized initially as an inactive proenzyme. Formation of the active enzyme involves a self-maturation process in which the active site pyruvoyl group is generated from an internal serine residue via an autocatalytic post-translational modification. Two non-identical subunits are generated from the proenzyme in this reaction, and the pyruvate is formed at the N-terminus of the alpha chain, which is derived from the carboxyl end of the proenzyme. The post-translation cleavage follows an unusual pathway, termed non-hydrolytic serinolysis, in which the side chain hydroxyl group of the serine supplies its oxygen atom to form the C-terminus of the beta chain, while the remainder of the serine residue undergoes an oxidative deamination to produce ammonia and the pyruvoyl group blocking the N-terminus of the alpha chain.

The catalysed reaction is S-adenosyl-L-methionine + H(+) = S-adenosyl 3-(methylsulfanyl)propylamine + CO2. It participates in amine and polyamine biosynthesis; S-adenosylmethioninamine biosynthesis; S-adenosylmethioninamine from S-adenosyl-L-methionine: step 1/1. Catalyzes the decarboxylation of S-adenosylmethionine to S-adenosylmethioninamine (dcAdoMet), the propylamine donor required for the synthesis of the polyamines spermine and spermidine from the diamine putrescine. The protein is S-adenosylmethionine decarboxylase proenzyme of Clostridium tetani (strain Massachusetts / E88).